Reading from the N-terminus, the 589-residue chain is Glucose starvation modulator protein 1 (589 aa).

The segment at residues 20–48 (CVFCHQKHLQCSNERPCKNCVKRNIGHEC) is a DNA-binding region (zn(2)-C6 fungal-type). Disordered stretches follow at residues 59–90 (LTGNGKGSSSKTKTPRKKLKSTPITASSPSVA), 218–240 (NNSNNTSHNDNFIAQNNNNNPEP), and 340–362 (ANGQTEDLLDHNKDDSRKNPGNG). The span at 80-90 (TPITASSPSVA) shows a compositional bias: polar residues. Positions 347–357 (LLDHNKDDSRK) are enriched in basic and acidic residues. The region spanning 471-542 (SLLDYKKLVE…FKFFKNIAVN (72 aa)) is the PAS domain.

Belongs to the ERT1/acuK family.

The protein localises to the nucleus. Its function is as follows. Transcription factor which regulates nonfermentable carbon utilization. This is Glucose starvation modulator protein 1 (GSM1) from Candida tropicalis (strain ATCC MYA-3404 / T1) (Yeast).